The chain runs to 449 residues: Packaging protein 1 (449 aa).

The segment at 1–77 (METRGRRPAA…QPAKRGDMLD (77 aa)) is disordered. 171 to 178 (GPTGCGKS) provides a ligand contact to ATP. The tract at residues 440-449 (RAYRARKTPK) is DNA-binding.

The protein belongs to the adenoviridae packaging protein 1 family. In terms of assembly, homodimer. Part of a genome packaging complex composed of packaging proteins 1, 2 and 3; this complex specifically binds to the packaging sequence on the left end of viral genomic DNA and performs packaging of the viral genome. Interacts with protein 33K.

The protein localises to the virion. It localises to the host nucleus. The protein resides in the host nucleoplasm. Its subcellular location is the host nucleolus. In terms of biological role, component of the packaging machinery which encapsidates the viral DNA into preformed capsids and transcriptional activator of the viral major late promoter (MLP). Binds, along with packaging proteins 2 and 3, to the specific packaging sequence on the left end of viral genomic DNA and displays ATPase activity thereby providing the power stroke of the packaging machinery. The activity of packaging protein IVa2 is stimulated by protein 33K which acts as a terminase. May be the protein that pumps DNA into the capsid powered by ATP hydrolysis. Specifically binds to the 5'-CG-3' nucleotides of the repeats making up the packaging sequence. Component of the DEF-A and DEF-B transcription factors that bind downstream elements of the major late promoter (MLP), and stimulate transcription from the MLP after initiation of viral DNA replication. DEF-A is a heterodimer packaging proteins 1 and 2 and DEF-B is a homodimer of packaging protein 1. The chain is Packaging protein 1 from Homo sapiens (Human).